The following is a 281-amino-acid chain: Bifunctional protein FolD 1 (281 aa).

NADP(+) contacts are provided by residues 165 to 167, Ser190, and Ile231; that span reads GRS.

This sequence belongs to the tetrahydrofolate dehydrogenase/cyclohydrolase family. As to quaternary structure, homodimer.

It catalyses the reaction (6R)-5,10-methylene-5,6,7,8-tetrahydrofolate + NADP(+) = (6R)-5,10-methenyltetrahydrofolate + NADPH. The catalysed reaction is (6R)-5,10-methenyltetrahydrofolate + H2O = (6R)-10-formyltetrahydrofolate + H(+). The protein operates within one-carbon metabolism; tetrahydrofolate interconversion. In terms of biological role, catalyzes the oxidation of 5,10-methylenetetrahydrofolate to 5,10-methenyltetrahydrofolate and then the hydrolysis of 5,10-methenyltetrahydrofolate to 10-formyltetrahydrofolate. The protein is Bifunctional protein FolD 1 of Desulfitobacterium hafniense (strain Y51).